Reading from the N-terminus, the 176-residue chain is BPTI/Kunitz inhibitor domain-containing protein C02F12.5 (176 aa).

Residues methionine 1–cysteine 17 form the signal peptide. Residues cysteine 21–cysteine 74 enclose the BPTI/Kunitz inhibitor domain. 3 cysteine pairs are disulfide-bonded: cysteine 21-cysteine 74, cysteine 31-cysteine 57, and cysteine 49-cysteine 70. Residue asparagine 34 is glycosylated (N-linked (GlcNAc...) asparagine).

This is BPTI/Kunitz inhibitor domain-containing protein C02F12.5 from Caenorhabditis elegans.